We begin with the raw amino-acid sequence, 333 residues long: Anthranilate phosphoribosyltransferase (333 aa).

5-phospho-alpha-D-ribose 1-diphosphate is bound by residues Gly80, 83–84 (GD), Ser88, 90–93 (NIST), 108–116 (KHGNRSVSS), and Ser120. Gly80 is a binding site for anthranilate. Ser92 lines the Mg(2+) pocket. Anthranilate is bound at residue Asn111. Arg166 contacts anthranilate. Mg(2+)-binding residues include Asp224 and Glu225.

It belongs to the anthranilate phosphoribosyltransferase family. In terms of assembly, homodimer. The cofactor is Mg(2+).

It catalyses the reaction N-(5-phospho-beta-D-ribosyl)anthranilate + diphosphate = 5-phospho-alpha-D-ribose 1-diphosphate + anthranilate. Its pathway is amino-acid biosynthesis; L-tryptophan biosynthesis; L-tryptophan from chorismate: step 2/5. Its function is as follows. Catalyzes the transfer of the phosphoribosyl group of 5-phosphorylribose-1-pyrophosphate (PRPP) to anthranilate to yield N-(5'-phosphoribosyl)-anthranilate (PRA). This is Anthranilate phosphoribosyltransferase from Yersinia pseudotuberculosis serotype O:1b (strain IP 31758).